A 1630-amino-acid chain; its full sequence is Histone transcription regulator 3 homolog (1630 aa).

One copy of the TPR 1 repeat lies at 8–42 (NAASEDLDKEKRTLEIRIEEAVQIYQNALSAQKQG). The tract at residues 325–347 (KDIVPPPSDNLPKPQLLKRPIDD) is disordered. The stretch at 1230-1263 (WRALYMLGKACRKCGDMENALVHFEAAAALAPTK) is one TPR 2 repeat.

The protein belongs to the HIR3 family. In terms of assembly, interacts with hip1 and slm9.

The protein resides in the nucleus. Its function is as follows. Has a role in a nucleosome assembly pathway that is required for the integrity of heterochromatin and proper chromosome segregation. Required for transcriptional silencing in the outer repeat (otr) region of centromeric repeats and the Tf2 long terminal repeat retrotransposons. This chain is Histone transcription regulator 3 homolog (hip3), found in Schizosaccharomyces pombe (strain 972 / ATCC 24843) (Fission yeast).